Consider the following 499-residue polypeptide: Aspartyl/glutamyl-tRNA(Asn/Gln) amidotransferase subunit B (499 aa).

Belongs to the GatB/GatE family. GatB subfamily. Heterotrimer of A, B and C subunits.

It carries out the reaction L-glutamyl-tRNA(Gln) + L-glutamine + ATP + H2O = L-glutaminyl-tRNA(Gln) + L-glutamate + ADP + phosphate + H(+). The catalysed reaction is L-aspartyl-tRNA(Asn) + L-glutamine + ATP + H2O = L-asparaginyl-tRNA(Asn) + L-glutamate + ADP + phosphate + 2 H(+). In terms of biological role, allows the formation of correctly charged Asn-tRNA(Asn) or Gln-tRNA(Gln) through the transamidation of misacylated Asp-tRNA(Asn) or Glu-tRNA(Gln) in organisms which lack either or both of asparaginyl-tRNA or glutaminyl-tRNA synthetases. The reaction takes place in the presence of glutamine and ATP through an activated phospho-Asp-tRNA(Asn) or phospho-Glu-tRNA(Gln). The protein is Aspartyl/glutamyl-tRNA(Asn/Gln) amidotransferase subunit B of Mesorhizobium japonicum (strain LMG 29417 / CECT 9101 / MAFF 303099) (Mesorhizobium loti (strain MAFF 303099)).